The following is a 432-amino-acid chain: Adenylosuccinate synthetase (432 aa).

GTP is bound by residues 13–19 and 41–43; these read GDEGKGK and GHT. Asp-14 serves as the catalytic Proton acceptor. Mg(2+) contacts are provided by Asp-14 and Gly-41. IMP is bound by residues 14–17, 39–42, Thr-130, Arg-144, Gln-225, Thr-240, and Arg-304; these read DEGK and NAGH. His-42 serves as the catalytic Proton donor. Position 300–306 (300–306) interacts with substrate; the sequence is ATTGRRR. Residues Arg-306, 332–334, and 415–417 contribute to the GTP site; these read KLD and STG.

This sequence belongs to the adenylosuccinate synthetase family. Homodimer. The cofactor is Mg(2+).

It localises to the cytoplasm. The catalysed reaction is IMP + L-aspartate + GTP = N(6)-(1,2-dicarboxyethyl)-AMP + GDP + phosphate + 2 H(+). It functions in the pathway purine metabolism; AMP biosynthesis via de novo pathway; AMP from IMP: step 1/2. Plays an important role in the de novo pathway of purine nucleotide biosynthesis. Catalyzes the first committed step in the biosynthesis of AMP from IMP. The polypeptide is Adenylosuccinate synthetase (Salmonella typhi).